The chain runs to 292 residues: 11-beta-hydroxysteroid dehydrogenase 1 (292 aa).

Residues 1–7 (MAFMKKY) are Cytoplasmic-facing. A helical; Signal-anchor for type II membrane protein transmembrane segment spans residues 8–24 (LLPILGIFLAYYYYSAN). At 25–292 (EEFRPEMLRG…KYNMERFINN (268 aa)) the chain is on the lumenal side. NADP(+)-binding positions include 41–67 (GASK…TARS) and 92–93 (TM). N-linked (GlcNAc...) asparagine glycosylation is present at N95. An NADP(+)-binding site is contributed by 119-121 (NHI). Residue S170 participates in substrate binding. Residue Y183 is the Proton acceptor of the active site. Position 183-187 (183-187 (YSASK)) interacts with NADP(+). N-linked (GlcNAc...) asparagine glycosylation occurs at N207. NADP(+) is bound by residues 216-222 (GLIDTDT) and 218-222 (IDTDT).

The protein belongs to the short-chain dehydrogenases/reductases (SDR) family. Homodimer. In terms of tissue distribution, liver, kidney, lung, hypothalamus, anterior pituitary and placenta.

It is found in the endoplasmic reticulum membrane. It carries out the reaction an 11beta-hydroxysteroid + NADP(+) = an 11-oxosteroid + NADPH + H(+). It catalyses the reaction corticosterone + NADP(+) = 11-dehydrocorticosterone + NADPH + H(+). The catalysed reaction is cortisone + NADPH + H(+) = cortisol + NADP(+). The enzyme catalyses a 7beta-hydroxysteroid + NADP(+) = a 7-oxosteroid + NADPH + H(+). It carries out the reaction 7-oxocholesterol + NADPH + H(+) = 7beta-hydroxycholesterol + NADP(+). It catalyses the reaction chenodeoxycholate + NADP(+) = 7-oxolithocholate + NADPH + H(+). The catalysed reaction is 7-oxolithocholate + NADPH + H(+) = ursodeoxycholate + NADP(+). The enzyme catalyses glycochenodeoxycholate + NADP(+) = 7-oxoglycolithocholate + NADPH + H(+). It carries out the reaction taurochenodeoxycholate + NADP(+) = 7-oxotaurolithocholate + NADPH + H(+). It catalyses the reaction tauroursodeoxycholate + NADP(+) = 7-oxotaurolithocholate + NADPH + H(+). The catalysed reaction is glycoursodeoxycholate + NADP(+) = 7-oxoglycolithocholate + NADPH + H(+). The enzyme catalyses 7-oxopregnenolone + NADPH + H(+) = 7beta-hydroxypregnenolone + NADP(+). It carries out the reaction 3beta,7alpha-dihydroxyandrost-5-en-17-one + NADP(+) = 3beta-hydroxy-5-androstene-7,17-dione + NADPH + H(+). It catalyses the reaction 3beta-hydroxy-5-androstene-7,17-dione + NADPH + H(+) = 3beta,7beta-dihydroxyandrost-5-en-17-one + NADP(+). The catalysed reaction is 3beta-hydroxy-5alpha-androstane-7,17-dione + NADPH + H(+) = 3beta,7beta-dihydroxy-5alpha-androstan-17-one + NADP(+). Its function is as follows. Controls the reversible conversion of biologically active glucocorticoids such as cortisone to cortisol, and 11-dehydrocorticosterone to corticosterone in the presence of NADP(H). Participates in the corticosteroid receptor-mediated anti-inflammatory response, as well as metabolic and homeostatic processes. Plays a role in the secretion of aqueous humor in the eye, maintaining a normotensive, intraocular environment. Bidirectional in vitro, predominantly functions as a reductase in vivo, thereby increasing the concentration of active glucocorticoids. It has broad substrate specificity, besides glucocorticoids, it accepts other steroid and sterol substrates. Interconverts 7-oxo- and 7-hydroxy-neurosteroids such as 7-oxopregnenolone and 7beta-hydroxypregnenolone, 7-oxodehydroepiandrosterone (3beta-hydroxy-5-androstene-7,17-dione) and 7beta-hydroxydehydroepiandrosterone (3beta,7beta-dihydroxyandrost-5-en-17-one), among others. Catalyzes the stereo-specific conversion of the major dietary oxysterol, 7-ketocholesterol (7-oxocholesterol), into the more polar 7-beta-hydroxycholesterol metabolite. 7-oxocholesterol is one of the most important oxysterols, it participates in several events such as induction of apoptosis, accumulation in atherosclerotic lesions, lipid peroxidation, and induction of foam cell formation. Mediates the 7-oxo reduction of 7-oxolithocholate mainly to chenodeoxycholate, and to a lesser extent to ursodeoxycholate, both in its free form and when conjugated to glycine or taurine, providing a link between glucocorticoid activation and bile acid metabolism. Catalyzes the synthesis of 7-beta-25-dihydroxycholesterol from 7-oxo-25-hydroxycholesterol in vitro, which acts as a ligand for the G-protein-coupled receptor (GPCR) Epstein-Barr virus-induced gene 2 (EBI2) and may thereby regulate immune cell migration. This is 11-beta-hydroxysteroid dehydrogenase 1 (HSD11B1) from Ovis aries (Sheep).